A 699-amino-acid polypeptide reads, in one-letter code: Elongation factor G (699 aa).

Positions 8–288 (EDYRNFGIMA…AVVDYLPSPL (281 aa)) constitute a tr-type G domain. Residues 17 to 24 (AHIDAGKT), 86 to 90 (DTPGH), and 140 to 143 (NKMD) each bind GTP.

It belongs to the TRAFAC class translation factor GTPase superfamily. Classic translation factor GTPase family. EF-G/EF-2 subfamily.

The protein localises to the cytoplasm. Functionally, catalyzes the GTP-dependent ribosomal translocation step during translation elongation. During this step, the ribosome changes from the pre-translocational (PRE) to the post-translocational (POST) state as the newly formed A-site-bound peptidyl-tRNA and P-site-bound deacylated tRNA move to the P and E sites, respectively. Catalyzes the coordinated movement of the two tRNA molecules, the mRNA and conformational changes in the ribosome. The sequence is that of Elongation factor G from Rhizobium etli (strain ATCC 51251 / DSM 11541 / JCM 21823 / NBRC 15573 / CFN 42).